The sequence spans 247 residues: ATP synthase subunit a, chloroplastic (247 aa).

A run of 5 helical transmembrane segments spans residues 38-58 (QVLI…IIAV), 95-115 (VPFI…GALL), 134-154 (INTT…AGLT), 199-219 (LVVV…VMFL), and 220-240 (GLFT…AYIG).

The protein belongs to the ATPase A chain family. In terms of assembly, F-type ATPases have 2 components, CF(1) - the catalytic core - and CF(0) - the membrane proton channel. CF(1) has five subunits: alpha(3), beta(3), gamma(1), delta(1), epsilon(1). CF(0) has four main subunits: a, b, b' and c.

Its subcellular location is the plastid. The protein localises to the chloroplast thylakoid membrane. Functionally, key component of the proton channel; it plays a direct role in the translocation of protons across the membrane. The polypeptide is ATP synthase subunit a, chloroplastic (Carica papaya (Papaya)).